Reading from the N-terminus, the 229-residue chain is MAEDFGFFSSSESGAPEAAEEDPAAAFLAQQESEIAGIENDSGFGAPAASQVASAQPGLASGGGSEDMGTTVNGDVFQEANGPADGYAAIAQADRLTQEPESIRKWREEQKKRLQELDAASKVTEQEWREKAKKDLEEWNQRQSEQVEKNKINNRIADKAFYQQPDADTIGYVASEEAFVKESKEETPGTEWEKVAQLCDFNPKSSKQCKDVSRLRSVLMSLKQTPLSR.

Low complexity-rich tracts occupy residues 1–17 (MAEDFGFFSSSESGAPE) and 45–58 (GAPAASQVASAQPG). Residues 1–80 (MAEDFGFFSS…TVNGDVFQEA (80 aa)) are disordered. Phosphoserine is present on residues serine 11 and serine 13. Residues 93–155 (ADRLTQEPES…QVEKNKINNR (63 aa)) form an involved in binding clathrin heavy chain region. Residue threonine 187 is modified to Phosphothreonine. Cysteine 199 and cysteine 209 are joined by a disulfide. Lysine 204 is modified (N6-acetyllysine). Residue serine 217 is modified to Phosphoserine.

The protein belongs to the clathrin light chain family. Clathrin coats are formed from molecules containing 3 heavy chains and 3 light chains. Interacts (via N-terminus) with HIP1. Interacts with HIP1R.

It is found in the cytoplasmic vesicle membrane. It localises to the membrane. The protein resides in the coated pit. Its function is as follows. Clathrin is the major protein of the polyhedral coat of coated pits and vesicles. This Rattus norvegicus (Rat) protein is Clathrin light chain B (Cltb).